The primary structure comprises 152 residues: Lipoprotein signal peptidase (152 aa).

Helical transmembrane passes span 55-75 and 85-105; these read NKMW…VFYM and LGIS…DRVF. Residues aspartate 111 and aspartate 129 contribute to the active site. A helical membrane pass occupies residues 124-144; it reads VFNIADSALCIGVVLIIIQTL.

Belongs to the peptidase A8 family.

It is found in the cell membrane. It carries out the reaction Release of signal peptides from bacterial membrane prolipoproteins. Hydrolyzes -Xaa-Yaa-Zaa-|-(S,diacylglyceryl)Cys-, in which Xaa is hydrophobic (preferably Leu), and Yaa (Ala or Ser) and Zaa (Gly or Ala) have small, neutral side chains.. The protein operates within protein modification; lipoprotein biosynthesis (signal peptide cleavage). In terms of biological role, this protein specifically catalyzes the removal of signal peptides from prolipoproteins. The chain is Lipoprotein signal peptidase from Bacillus cereus (strain G9842).